A 384-amino-acid chain; its full sequence is Putative D-galactosamine-6-phosphate deaminase AgaS (384 aa).

SIS domains lie at 45–197 (LEPL…SQTF) and 215–364 (SEGV…PDTP).

The protein belongs to the SIS family. AgaS subfamily.

It catalyses the reaction D-galactosamine 6-phosphate + H2O = D-tagatopyranose 1-phosphate + NH4(+). Functionally, catalyzes the isomerization-deamination of galactosamine 6-phosphate to form tagatofuranose 6-phosphate and ammonium ion. The protein is Putative D-galactosamine-6-phosphate deaminase AgaS (agaS) of Escherichia coli (strain K12).